The sequence spans 546 residues: CCA tRNA nucleotidyltransferase, mitochondrial (546 aa).

Belongs to the tRNA nucleotidyltransferase/poly(A) polymerase family.

Its subcellular location is the mitochondrion. It localises to the cytoplasm. The protein localises to the nucleus. It catalyses the reaction a tRNA precursor + 2 CTP + ATP = a tRNA with a 3' CCA end + 3 diphosphate. Its function is as follows. Nucleotidyltransferase that catalyzes the addition and repair of the essential 3'-terminal CCA sequence in tRNAs, which is necessary for the attachment of amino acids to the 3' terminus of tRNA molecules, using CTP and ATP as substrates. tRNA 3'-terminal CCA addition is required both for tRNA processing and repair. Also involved in tRNA surveillance by mediating tandem CCA addition to generate a CCACCA at the 3' terminus of unstable tRNAs. While stable tRNAs receive only 3'-terminal CCA, unstable tRNAs are marked with CCACCA and rapidly degraded. The structural flexibility of RNA controls the choice between CCA versus CCACCA addition: following the first CCA addition cycle, nucleotide-binding to the active site triggers a clockwise screw motion, producing torque on the RNA. This ejects stable RNAs, whereas unstable RNAs are refolded while bound to the enzyme and subjected to a second CCA catalytic cycle. The protein is CCA tRNA nucleotidyltransferase, mitochondrial (CCA1) of Saccharomyces cerevisiae (strain ATCC 204508 / S288c) (Baker's yeast).